The following is a 338-amino-acid chain: Mitochondrial E3 ubiquitin protein ligase 1 (338 aa).

Topologically, residues 1–3 (MEF) are cytoplasmic. A helical membrane pass occupies residues 4 to 24 (LHESVALGVDLLILGLCAREY). Topologically, residues 25–227 (VHYKRTAKVL…LIKRFEDAKT (203 aa)) are mitochondrial intermembrane. The helical transmembrane segment at 228–248 (TTILKLVVCSTISAILVAFIA) threads the bilayer. The Cytoplasmic portion of the chain corresponds to 249–338 (KKLYRKRKQE…IVSKAAAFIA (90 aa)). An RING-type zinc finger spans residues 290-326 (CVVCSTNPKEIILLPCGHVCLCEDCAQKISVTCPVCR).

Interacts with Marf. Auto-ubiquitinated.

It is found in the mitochondrion outer membrane. The catalysed reaction is S-ubiquitinyl-[E2 ubiquitin-conjugating enzyme]-L-cysteine + [acceptor protein]-L-lysine = [E2 ubiquitin-conjugating enzyme]-L-cysteine + N(6)-ubiquitinyl-[acceptor protein]-L-lysine.. Functionally, exhibits weak E3 ubiquitin-protein ligase activity. E3 ubiquitin ligases accept ubiquitin from an E2 ubiquitin-conjugating enzyme in the form of a thioester and then directly transfer the ubiquitin to targeted substrates. Plays a role in the control of mitochondrial morphology by promoting mitochondrial fission. Negatively regulates the mitochondrial fusion protein marf by promoting its ubiquitination, acting in a pathway that is parallel to the park/pink1 regulatory pathway. In Drosophila melanogaster (Fruit fly), this protein is Mitochondrial E3 ubiquitin protein ligase 1.